The following is a 1998-amino-acid chain: Histone acetyltransferase KAT6A (1998 aa).

An SAMD1-like winged helix (WH) domain is found at 1–77; sequence MVKLANPLYT…LNSYKDPDNP (77 aa). The tract at residues 1-144 is required for activation of RUNX1-1; it reads MVKLANPLYT…CGGTAASGFH (144 aa). The interval 52–166 is required for nuclear localization; it reads ELSVKDGTIL…HGRLLKDGPL (115 aa). The segment at 72–93 is disordered; it reads KDPDNPGRIALPKPRNHGKLDN. The H15 domain maps to 95–171; that stretch reads QSVDWNKLLK…KDGPLYRLNT (77 aa). The interval 144 to 662 is interaction with PML; the sequence is HQQLRLAIKR…RKGYGRFLID (519 aa). K172 bears the N6-acetyllysine mark. PHD-type zinc fingers lie at residues 199–258 and 255–306; these read DKPV…LRWQ and LRWQ…GMWI. An interaction with RUNX1-1 region spans residues 312 to 662; sequence PRKKGRKLLQ…RKGYGRFLID (351 aa). The interval 336–377 is disordered; that stretch reads GRPKNRLKKQSTVSKGPFSKVRTGPGRGRKRKITVSSQSASS. K350 and K355 each carry N6-acetyllysine. T369 is modified (phosphothreonine; by PKB/AKT1). S419 is modified (phosphoserine). Residues 440–464 are disordered; it reads KGNRKSSTSHWPTDNQDGWESKQES. Residues 444–457 are compositionally biased toward polar residues; the sequence is KSSTSHWPTDNQDG. S471 carries the phosphoserine modification. Residues 486–776 form a catalytic region; sequence IQEQALQKVG…VDPECLRWTP (291 aa). An MYST-type HAT domain is found at 502–776; the sequence is PQVRCPSVIE…VDPECLRWTP (275 aa). The interval 505 to 808 is mediates interaction with BRPF1, required for histone H3 acetyltransferase activity; the sequence is RCPSVIEFGK…EPQGQERELE (304 aa). The C2HC MYST-type zinc finger occupies 535–560; it reads LYLCEFCLKYMKSRTILQQHMKKCGW. K602 is modified (N6-acetyllysine; by autocatalysis). Residues 643 to 647 and 652 to 658 contribute to the acetyl-CoA site; these read SCIMI and QRKGYGR. The active-site Proton donor/acceptor is the E678. An acetyl-CoA-binding site is contributed by S682. A disordered region spans residues 783 to 947; it reads VVSEEEDEEA…RFSESADLWR (165 aa). S785 carries the phosphoserine modification. Over residues 785-797 the composition is skewed to acidic residues; sequence SEEEDEEADDGEK. A compositionally biased stretch (basic and acidic residues) spans 798 to 840; that stretch reads EEPQGQERELETRERVGKSVSRENKDQDSSSLIESEKKPEVKE. Position 815 is an N6-acetyllysine (K815). K835 is covalently cross-linked (Glycyl lysine isopeptide (Lys-Gly) (interchain with G-Cter in SUMO2)). Over residues 865-874 the composition is skewed to basic residues; sequence RRGRCGRKNR. Basic and acidic residues predominate over residues 875–886; that stretch reads KTQERFGDKDSK. Y900 is modified (phosphotyrosine). The span at 903-916 shows a compositional bias: basic and acidic residues; that stretch reads CEEKSAASRERYTE. Residues S940 and S953 each carry the phosphoserine modification. Residues 982 to 1079 are disordered; the sequence is GFSESSEEEE…EEEEDENELF (98 aa). K1006 is modified (N6-acetyllysine). Residues 1008–1029 show a composition bias toward basic residues; it reads TLKRKKPILHRRRRVRKRKHHN. A compositionally biased stretch (low complexity) spans 1030-1041; the sequence is SSVVTETISETT. 2 stretches are compositionally biased toward acidic residues: residues 1042–1052 and 1064–1077; these read EVLDEPFEDSD and FEIE…DENE. A phosphoserine mark is found at S1088, S1089, and S1114. Disordered regions lie at residues 1096–1175, 1195–1436, 1450–1567, and 1630–1702; these read QASS…PGFK, PIKP…EGAY, QSYT…STMG, and TCVV…CSMN. The span at 1106-1119 shows a compositional bias: acidic residues; it reads DEEEEEEESDDADD. The segment covering 1135 to 1146 has biased composition (polar residues); sequence NSASLEPDTSTP. Over residues 1147–1173 the composition is skewed to basic residues; sequence MKKKKGWPKGKSRKPIHWKKRPGRKPG. Residues 1203 to 1228 are compositionally biased toward basic and acidic residues; it reads RTQESEELVEVKEGLVEERKEEMHTE. 2 stretches are compositionally biased toward acidic residues: residues 1229–1240 and 1281–1298; these read ADEEAEEEEDAA and EEPQ…DEVT. Composition is skewed to basic and acidic residues over residues 1316–1333, 1351–1360, and 1392–1413; these read HLDS…ARED, DSRENAKDKD, and DSNT…HSEL. A compositionally biased stretch (low complexity) spans 1472–1496; it reads HNSPISSIPSHPSQSVRSVSSPSMP. Residues 1501 to 1522 are compositionally biased toward polar residues; that stretch reads GYTQISPEQGSLSAPSMQNMET. An interaction with RUNX1-2 region spans residues 1510-1635; the sequence is GSLSAPSMQN…KSPQTCVVER (126 aa). The interval 1510 to 1735 is interaction with PML; sequence GSLSAPSMQN…YERIPGDFGA (226 aa). A compositionally biased stretch (low complexity) spans 1527–1541; sequence DVPSVSDHSQQVVDS. The segment covering 1549 to 1567 has biased composition (polar residues); it reads IESTTENYENPSSYDSTMG. 2 stretches are compositionally biased toward pro residues: residues 1639–1658 and 1665–1693; these read NQQP…PQPQ and PQPP…PQQQ. The required for activation of RUNX1-2 stretch occupies residues 1907–1942; it reads SMNMNTLNAMNSYRMTQPMMNSSYHSNPAYMNQTAQ.

It belongs to the MYST (SAS/MOZ) family. In terms of assembly, component of the MOZ/MORF complex composed at least of ING5, KAT6A, KAT6B, MEAF6 and one of BRPF1, BRD1/BRPF2 and BRPF3. Interacts with RUNX1; phosphorylation of RUNX1 enhances the interaction. Interacts with RUNX2. Interacts with p53/TP53. Interacts with PML and this interaction positively regulates its acetylation activity towards p53/TP53. Post-translationally, autoacetylated. Autoacetylation at Lys-602 is required for proper function. Phosphorylation at Thr-369 by PKB/AKT1 inhibits its interaction with PML and negatively regulates its acetylation activity towards p53/TP53.

It is found in the nucleus. Its subcellular location is the nucleolus. The protein resides in the nucleoplasm. The protein localises to the PML body. It catalyses the reaction L-lysyl-[protein] + acetyl-CoA = N(6)-acetyl-L-lysyl-[protein] + CoA + H(+). Histone acetyltransferase that acetylates lysine residues in histone H3 and histone H4 (in vitro). Component of the MOZ/MORF complex which has a histone H3 acetyltransferase activity. May act as a transcriptional coactivator for RUNX1 and RUNX2. Acetylates p53/TP53 at 'Lys-120' and 'Lys-382' and controls its transcriptional activity via association with PML. This is Histone acetyltransferase KAT6A (Kat6a) from Rattus norvegicus (Rat).